Reading from the N-terminus, the 469-residue chain is 6-phosphofructo-2-kinase/fructose-2,6-bisphosphatase 4 (469 aa).

The 6-phosphofructo-2-kinase stretch occupies residues 1–249 (MASPRELTQN…YYLMNIHVTP (249 aa)). 46–54 (GLPARGKTY) contributes to the ATP binding site. The beta-D-fructose 6-phosphate site is built by Arg-79 and Arg-103. The active site involves Asp-129. 2 residues coordinate beta-D-fructose 6-phosphate: Thr-131 and Arg-137. The active site involves Cys-159. Position 168–173 (168–173 (NIVQVK)) interacts with ATP. Beta-D-fructose 6-phosphate is bound by residues Lys-173, Arg-194, and Tyr-198. Positions 250-469 (RSIYLCRHGE…EALVTVPAHQ (220 aa)) are fructose-2,6-bisphosphatase. Arg-256 is a binding site for beta-D-fructose 2,6-bisphosphate. The active-site Tele-phosphohistidine intermediate is the His-257. Beta-D-fructose 2,6-bisphosphate contacts are provided by Asn-263, Gly-269, and Arg-306. Glu-326 functions as the Proton donor/acceptor in the catalytic mechanism. Residues Tyr-337, Arg-351, Lys-355, Tyr-366, Gln-392, and Arg-396 each contribute to the beta-D-fructose 2,6-bisphosphate site. 348 to 351 (FALR) lines the ATP pocket. Residues 392-396 (QAVMR) and Tyr-428 each bind ATP. Thr-444 bears the Phosphothreonine; by PKC mark.

In the C-terminal section; belongs to the phosphoglycerate mutase family. In terms of assembly, homodimer.

It catalyses the reaction beta-D-fructose 2,6-bisphosphate + H2O = beta-D-fructose 6-phosphate + phosphate. The catalysed reaction is beta-D-fructose 6-phosphate + ATP = beta-D-fructose 2,6-bisphosphate + ADP + H(+). With respect to regulation, the most important regulatory mechanism of these opposing activities is by phosphorylation and dephosphorylation of the enzyme. In terms of biological role, synthesis and degradation of fructose 2,6-bisphosphate. The polypeptide is 6-phosphofructo-2-kinase/fructose-2,6-bisphosphatase 4 (PFKFB4) (Homo sapiens (Human)).